The sequence spans 82 residues: U-scoloptoxin(21)-Sm3a (82 aa).

Residues 1–21 (MKIIALLLMVFLDFIIVNXAE) form the signal peptide.

Belongs to the scoloptoxin-21 family. In terms of tissue distribution, expressed by the venom gland.

It localises to the secreted. The polypeptide is U-scoloptoxin(21)-Sm3a (Scolopendra morsitans (Tanzanian blue ringleg centipede)).